A 401-amino-acid chain; its full sequence is Tryptophan synthase beta chain (401 aa).

At Lys91 the chain carries N6-(pyridoxal phosphate)lysine.

It belongs to the TrpB family. In terms of assembly, tetramer of two alpha and two beta chains. The cofactor is pyridoxal 5'-phosphate.

The catalysed reaction is (1S,2R)-1-C-(indol-3-yl)glycerol 3-phosphate + L-serine = D-glyceraldehyde 3-phosphate + L-tryptophan + H2O. It functions in the pathway amino-acid biosynthesis; L-tryptophan biosynthesis; L-tryptophan from chorismate: step 5/5. Its function is as follows. The beta subunit is responsible for the synthesis of L-tryptophan from indole and L-serine. The chain is Tryptophan synthase beta chain from Lactococcus lactis subsp. cremoris (strain SK11).